A 154-amino-acid chain; its full sequence is 6,7-dimethyl-8-ribityllumazine synthase (154 aa).

5-amino-6-(D-ribitylamino)uracil-binding positions include F23, 57-59, and 81-83; these read AFE and AVI. 86–87 contributes to the (2S)-2-hydroxy-3-oxobutyl phosphate binding site; that stretch reads AT. The Proton donor role is filled by H89. F114 is a 5-amino-6-(D-ribitylamino)uracil binding site. R128 lines the (2S)-2-hydroxy-3-oxobutyl phosphate pocket.

It belongs to the DMRL synthase family.

The catalysed reaction is (2S)-2-hydroxy-3-oxobutyl phosphate + 5-amino-6-(D-ribitylamino)uracil = 6,7-dimethyl-8-(1-D-ribityl)lumazine + phosphate + 2 H2O + H(+). The protein operates within cofactor biosynthesis; riboflavin biosynthesis; riboflavin from 2-hydroxy-3-oxobutyl phosphate and 5-amino-6-(D-ribitylamino)uracil: step 1/2. Functionally, catalyzes the formation of 6,7-dimethyl-8-ribityllumazine by condensation of 5-amino-6-(D-ribitylamino)uracil with 3,4-dihydroxy-2-butanone 4-phosphate. This is the penultimate step in the biosynthesis of riboflavin. The polypeptide is 6,7-dimethyl-8-ribityllumazine synthase (Nautilia profundicola (strain ATCC BAA-1463 / DSM 18972 / AmH)).